The primary structure comprises 71 residues: Keratin-associated protein 6-1 (71 aa).

It belongs to the KRTAP type 6 family. In terms of assembly, interacts with hair keratins.

In the hair cortex, hair keratin intermediate filaments are embedded in an interfilamentous matrix, consisting of hair keratin-associated proteins (KRTAP), which are essential for the formation of a rigid and resistant hair shaft through their extensive disulfide bond cross-linking with abundant cysteine residues of hair keratins. The matrix proteins include the high-sulfur and high-glycine-tyrosine keratins. This Homo sapiens (Human) protein is Keratin-associated protein 6-1 (KRTAP6-1).